A 474-amino-acid polypeptide reads, in one-letter code: Microtubule protein alp7 (474 aa).

Over residues 1–20 (MSDIVSSSTDYSRRSPSSSS) the composition is skewed to low complexity. Disordered regions lie at residues 1–79 (MSDI…DTLN), 93–114 (KSFD…LSQH), and 164–223 (SLQT…NSTQ). The residue at position 17 (Ser17) is a Phosphoserine. Positions 25–36 (ETDHTGFHEKRQ) are enriched in basic and acidic residues. The span at 66 to 76 (SKPNPQLNLKD) shows a compositional bias: polar residues. Composition is skewed to polar residues over residues 177-189 (SNGS…NTAP) and 201-223 (RNSA…NSTQ). 2 coiled-coil regions span residues 219–273 (INST…QLRS) and 367–471 (KISN…LNLE).

In terms of assembly, interacts with alp14.

It localises to the nucleus. The protein localises to the cytoplasm. Its subcellular location is the cytoskeleton. It is found in the spindle. The protein resides in the chromosome. It localises to the centromere. The protein localises to the kinetochore. In terms of biological role, required for bipolar spindle formation and proper chromosome segregation. Has an indirect role in connecting the kinetochores and the plus end of pole to chromosome microtubules by targeting alp14 to the spindle pole body. Involved in the emergence of large microtubule organizing centers (MTOC) in interphase cells. Attaches to the minus ends of microtubules and associates with the sites of microtubule attachment on the nuclear envelope. This leads to the stabilization of the microtubule bundles. The protein is Microtubule protein alp7 (alp7) of Schizosaccharomyces pombe (strain 972 / ATCC 24843) (Fission yeast).